The primary structure comprises 447 residues: Tryptophan synthase beta chain (447 aa).

Residue lysine 92 is modified to N6-(pyridoxal phosphate)lysine. The interval 408-447 is disordered; sequence GLAVKGGEQPKEFSDGPPLGKLAPSGGSAVREATSVGARK.

The protein belongs to the TrpB family. Tetramer of two alpha and two beta chains. Pyridoxal 5'-phosphate is required as a cofactor.

The enzyme catalyses (1S,2R)-1-C-(indol-3-yl)glycerol 3-phosphate + L-serine = D-glyceraldehyde 3-phosphate + L-tryptophan + H2O. It functions in the pathway amino-acid biosynthesis; L-tryptophan biosynthesis; L-tryptophan from chorismate: step 5/5. Functionally, the beta subunit is responsible for the synthesis of L-tryptophan from indole and L-serine. The protein is Tryptophan synthase beta chain of Polaromonas sp. (strain JS666 / ATCC BAA-500).